Reading from the N-terminus, the 247-residue chain is Transmembrane protein 69 (247 aa).

5 helical membrane passes run 97–117, 122–142, 159–179, 185–205, and 216–236; these read ALCVTLAGLIPFVAPPLVMLM, IPILAFTQMAYGASFLSFLGG, YLNLASSAAPLFFSWFAFLIS, AIVTVIMGMGVAFHLELFLLP, and IVVTLLATFSFIITLVVKSSF.

The protein localises to the membrane. This Homo sapiens (Human) protein is Transmembrane protein 69 (TMEM69).